A 177-amino-acid polypeptide reads, in one-letter code: Large ribosomal subunit protein uL6 (177 aa).

Belongs to the universal ribosomal protein uL6 family. As to quaternary structure, part of the 50S ribosomal subunit.

Its function is as follows. This protein binds to the 23S rRNA, and is important in its secondary structure. It is located near the subunit interface in the base of the L7/L12 stalk, and near the tRNA binding site of the peptidyltransferase center. The protein is Large ribosomal subunit protein uL6 of Rhodopseudomonas palustris (strain BisB5).